The following is an 874-amino-acid chain: Bifunctional uridylyltransferase/uridylyl-removing enzyme (874 aa).

Residues 1–332 (MPLQSPLTFS…NGGATENAEI (332 aa)) form a uridylyltransferase region. Residues 333–692 (LDADFQRRGS…ISKKATRGGT (360 aa)) are uridylyl-removing. In terms of domain architecture, HD spans 451 to 573 (VDEHSIRLLK…VRDEESLEYL (123 aa)). ACT domains follow at residues 693–777 (EVFV…RTPN) and 800–874 (LMEF…AVTA).

Belongs to the GlnD family. Requires Mg(2+) as cofactor.

The catalysed reaction is [protein-PII]-L-tyrosine + UTP = [protein-PII]-uridylyl-L-tyrosine + diphosphate. It carries out the reaction [protein-PII]-uridylyl-L-tyrosine + H2O = [protein-PII]-L-tyrosine + UMP + H(+). With respect to regulation, uridylyltransferase (UTase) activity is inhibited by glutamine, while glutamine activates uridylyl-removing (UR) activity. Modifies, by uridylylation and deuridylylation, the PII regulatory proteins (GlnB and homologs), in response to the nitrogen status of the cell that GlnD senses through the glutamine level. Under low glutamine levels, catalyzes the conversion of the PII proteins and UTP to PII-UMP and PPi, while under higher glutamine levels, GlnD hydrolyzes PII-UMP to PII and UMP (deuridylylation). Thus, controls uridylylation state and activity of the PII proteins, and plays an important role in the regulation of nitrogen assimilation and metabolism. This is Bifunctional uridylyltransferase/uridylyl-removing enzyme from Vibrio parahaemolyticus serotype O3:K6 (strain RIMD 2210633).